The sequence spans 251 residues: MAGHSKFKNIMHRKGRADAARSKLFSKLSREITVAAKTGLPDPAMNPRLRLAVNNAKAESLPKDVIERAIKKSQMGDAADYSEIRYEGVAAGGVGIIVEVLTDNKNRAAANVRSYFTKMGGNMGATGSVTFNFDRVGQISYPAKAASEDDMMEAAIEAGADDVTSDMDEEGEGHTVYTAFESLNDVAAALEAKFGAASNTKIAWRPKMQVPVTGDAVATLMKLLDMLDEDDDVQAVYSNEDISDEDLAKLG.

The protein belongs to the TACO1 family.

The protein localises to the cytoplasm. This Caulobacter vibrioides (strain ATCC 19089 / CIP 103742 / CB 15) (Caulobacter crescentus) protein is Probable transcriptional regulatory protein CC_3243.